Reading from the N-terminus, the 465-residue chain is Deoxyguanosinetriphosphate triphosphohydrolase-like protein (465 aa).

The disordered stretch occupies residues 1–22; sequence MKWDKLLNDKRRRESGVTRSKN. In terms of domain architecture, HD spans 63–252; that stretch reads RLTHSMEVST…LEVADDIAYL (190 aa).

The protein belongs to the dGTPase family. Type 3 subfamily.

This chain is Deoxyguanosinetriphosphate triphosphohydrolase-like protein, found in Listeria monocytogenes serovar 1/2a (strain ATCC BAA-679 / EGD-e).